The sequence spans 320 residues: dTDP-glucose 4,6-dehydratase (320 aa).

Residues 11-12, 38-41, 64-65, 84-88, and Ser-103 each bind NAD(+); these read FI, DKLG, DI, and FAAET. Substrate is bound at residue Thr-88. Thr-128 lines the substrate pocket. The active-site Proton donor is Asp-129. Residues Glu-130 and Tyr-152 each act as proton acceptor in the active site. 152-156 contributes to the NAD(+) binding site; the sequence is YAASK. Asn-181 is a binding site for substrate. Asn-182 contributes to the NAD(+) binding site. Residues 191–192, 207–209, Arg-216, Asn-251, and 274–278 each bind substrate; these read KM, PVY, and DRKGH.

Belongs to the NAD(P)-dependent epimerase/dehydratase family. dTDP-glucose dehydratase subfamily. As to quaternary structure, homodimer. NAD(+) is required as a cofactor.

The enzyme catalyses dTDP-alpha-D-glucose = dTDP-4-dehydro-6-deoxy-alpha-D-glucose + H2O. Its function is as follows. Probably involved in the biosynthesis of the acarviose moiety of the alpha-glucosidase inhibitor acarbose. Catalyzes the dehydration of dTDP-D-glucose to form dTDP-6-deoxy-D-xylo-4-hexulose via a three-step process involving oxidation, dehydration and reduction. In Actinoplanes sp. (strain ATCC 31044 / CBS 674.73 / SE50/110), this protein is dTDP-glucose 4,6-dehydratase.